We begin with the raw amino-acid sequence, 1012 residues long: Alanine--tRNA ligase, mitochondrial (1012 aa).

A mitochondrion-targeting transit peptide spans 1 to 24 (MYNSAKQLQRVLTAREIRKTFLDH). Zn(2+) is bound by residues His656, His660, Cys766, and His770.

It belongs to the class-II aminoacyl-tRNA synthetase family. In terms of assembly, monomer. Zn(2+) is required as a cofactor.

The protein resides in the mitochondrion. The enzyme catalyses tRNA(Ala) + L-alanine + ATP = L-alanyl-tRNA(Ala) + AMP + diphosphate. Its function is as follows. Catalyzes the attachment of alanine to tRNA(Ala) in a two-step reaction: alanine is first activated by ATP to form Ala-AMP and then transferred to the acceptor end of tRNA(Ala). Also edits incorrectly charged tRNA(Ala) via its editing domain. The chain is Alanine--tRNA ligase, mitochondrial from Drosophila melanogaster (Fruit fly).